The following is a 418-amino-acid chain: UDP-N-acetylglucosamine 1-carboxyvinyltransferase (418 aa).

Residue 22–23 participates in phosphoenolpyruvate binding; the sequence is KN. Arginine 91 is a binding site for UDP-N-acetyl-alpha-D-glucosamine. The active-site Proton donor is cysteine 115. Cysteine 115 carries the 2-(S-cysteinyl)pyruvic acid O-phosphothioketal modification. UDP-N-acetyl-alpha-D-glucosamine-binding residues include aspartate 305 and isoleucine 327.

It belongs to the EPSP synthase family. MurA subfamily.

It is found in the cytoplasm. It carries out the reaction phosphoenolpyruvate + UDP-N-acetyl-alpha-D-glucosamine = UDP-N-acetyl-3-O-(1-carboxyvinyl)-alpha-D-glucosamine + phosphate. The protein operates within cell wall biogenesis; peptidoglycan biosynthesis. Its function is as follows. Cell wall formation. Adds enolpyruvyl to UDP-N-acetylglucosamine. The sequence is that of UDP-N-acetylglucosamine 1-carboxyvinyltransferase from Aeromonas salmonicida (strain A449).